The following is a 571-amino-acid chain: Zinc metalloproteinase nas-15 (571 aa).

A signal peptide spans 1–15 (MREYVLIFLVAPVFA). N92 carries N-linked (GlcNAc...) asparagine glycosylation. The Peptidase M12A domain maps to 114–307 (NAIKNRLQLW…FKINTLYGCP (194 aa)). Intrachain disulfides connect C156-C306, C178-C197, C354-C388, C361-C381, and C370-C385. Zn(2+) is bound at residue H205. Residue E206 is part of the active site. Residues H209 and H215 each coordinate Zn(2+). The ShKT 1 domain maps to 354–388 (CRNLRGDCDDLAKQGWCIRNPGWMRANCPISCGMC). Positions 407 to 420 (TTTARPQKPVTQPI) are enriched in low complexity. Residues 407–426 (TTTARPQKPVTQPIQPLPPV) form a disordered region. Intrachain disulfides connect C437/C471, C444/C464, and C453/C468. One can recognise a ShKT 2 domain in the interval 437–471 (CEDLRVDCLVLVSQRYCKISQNFMKSYCAKSCGFC). Positions 500–530 (IRSRSPAPPVSTTTKAAPTTSTTSAAPYSPT) are disordered. A compositionally biased stretch (low complexity) spans 509–527 (VSTTTKAAPTTSTTSAAPY). 3 cysteine pairs are disulfide-bonded: C536/C571, C543/C564, and C552/C568. The ShKT 3 domain maps to 536 to 571 (CSDRKHFCSHWKSAGFCEGIFMNYMKKNCPASCGLC).

It depends on Zn(2+) as a cofactor. Expressed in pharyngeal marginal cells and muscles.

The protein resides in the secreted. In terms of biological role, metalloprotease. The polypeptide is Zinc metalloproteinase nas-15 (nas-15) (Caenorhabditis elegans).